The sequence spans 724 residues: Hyperosmolality-gated Ca2+ permeable channel 3.1 (724 aa).

The Extracellular segment spans residues M1–G4. Residues S5–T25 form a helical membrane-spanning segment. The Cytoplasmic segment spans residues W26 to F85. A helical membrane pass occupies residues V86–P108. At L109 to S147 the chain is on the extracellular side. Residues R148–A170 form a helical membrane-spanning segment. Residues Y171–S358 lie on the Cytoplasmic side of the membrane. Residues E241–T309 are a coiled coil. Residues R359–S385 traverse the membrane as a helical segment. The Extracellular portion of the chain corresponds to A386–T411. Residues V412–A439 form a helical membrane-spanning segment. The Cytoplasmic segment spans residues E440–A448. A helical transmembrane segment spans residues I449–G472. The Extracellular portion of the chain corresponds to T473–S497. Residues L498–I529 traverse the membrane as a helical segment. Residues F530–S554 are Cytoplasmic-facing. The chain crosses the membrane as a helical span at residues Y555–V574. A topological domain (extracellular) is located at residue I575. Residues A576–L594 form a helical membrane-spanning segment. Residues R595–M612 are Cytoplasmic-facing. A helical transmembrane segment spans residues W613–G636. Over A637–F641 the chain is Extracellular. Residues Y642 to Q662 traverse the membrane as a helical segment. The Cytoplasmic segment spans residues K663 to V724.

The protein belongs to the CSC1 (TC 1.A.17) family. As to quaternary structure, homodimer.

Its subcellular location is the membrane. Its function is as follows. Acts as a hyperosmolarity-gated non-selective cation channel that permeates Ca(2+) ions. Mechanosensitive ion channel that converts mechanical stimuli into a flow of ions: activated in response to membrane stretch. Not activated in response to membrane poke. In Arabidopsis thaliana (Mouse-ear cress), this protein is Hyperosmolality-gated Ca2+ permeable channel 3.1.